A 182-amino-acid polypeptide reads, in one-letter code: Kappa-casein (182 aa).

The N-terminal stretch at 1-20 (MKSFLLVVNALALTLPFLAV) is a signal peptide. Residues Thr-133, Thr-143, Thr-148, and Thr-151 are each glycosylated (O-linked (GalNAc...) threonine). Thr-157 bears the Phosphothreonine; alternate mark. A glycan (O-linked (GalNAc...) threonine; alternate) is linked at Thr-157. O-linked (GalNAc...) threonine glycosylation is found at Thr-167, Thr-169, and Thr-178.

Belongs to the kappa-casein family. As to quaternary structure, heteromultimers composed of alpha-s1 casein and kappa casein linked by disulfide bonds. The N-terminus is blocked. Mammary gland specific. Secreted in milk.

The protein localises to the secreted. Kappa-casein stabilizes micelle formation, preventing casein precipitation in milk. The protein is Kappa-casein (CSN3) of Homo sapiens (Human).